A 706-amino-acid chain; its full sequence is Semenogelin-2 (706 aa).

The first 23 residues, M1–G23, serve as a signal peptide directing secretion. Disordered stretches follow at residues K25–S62, K131–F156, and N276–H678. Over residues G50–S59 the composition is skewed to basic and acidic residues. The span at H137–S151 shows a compositional bias: polar residues. Positions T297–S308 are enriched in basic and acidic residues. Residues K329–Q339 show a composition bias toward polar residues. Residues D340 to K349 show a composition bias toward basic and acidic residues. Residues K389–Q399 show a composition bias toward polar residues. Residues D400–K409 are compositionally biased toward basic and acidic residues. Over residues K449–Q459 the composition is skewed to polar residues. Residues D460 to K469 are compositionally biased toward basic and acidic residues. The span at K509–Q519 shows a compositional bias: polar residues. The segment covering D520–K529 has biased composition (basic and acidic residues). Positions K569 to Q579 are enriched in polar residues. Residues D580–K589 are compositionally biased toward basic and acidic residues. Composition is skewed to polar residues over residues K611–T622 and S630–K653. Residues S654–Y670 are compositionally biased toward basic and acidic residues.

The protein belongs to the semenogelin family. In terms of assembly, interacts with SERPINA5.

The protein resides in the secreted. In terms of biological role, participates in the formation of a gel matrix (sperm coagulum) entrapping the accessory gland secretions and ejaculated spermatozoa. This Macaca mulatta (Rhesus macaque) protein is Semenogelin-2 (SEMG2).